The chain runs to 433 residues: Putative zinc metalloprotease BB_0118 (433 aa).

Histidine 17 contributes to the Zn(2+) binding site. Glutamate 18 is an active-site residue. Histidine 21 contacts Zn(2+). A helical transmembrane segment spans residues 98-120 (ILIYFAGPLFNLIFSFIVFIFIS). The region spanning 193–265 (TVSLQDFLKE…VVEIKFSRNG (73 aa)) is the PDZ domain. 3 helical membrane-spanning segments follow: residues 334–356 (VSGP…LYWI), 366–388 (LAGM…FISF), and 401–423 (TIYS…GLFN).

It belongs to the peptidase M50B family. The cofactor is Zn(2+).

It localises to the cell inner membrane. The sequence is that of Putative zinc metalloprotease BB_0118 from Borreliella burgdorferi (strain ATCC 35210 / DSM 4680 / CIP 102532 / B31) (Borrelia burgdorferi).